Consider the following 1721-residue polypeptide: Ras guanine nucleotide exchange factor R (1721 aa).

A coiled-coil region spans residues 148-279 (QLEDEVDLVH…LQQQQQQQRS (132 aa)). 6 disordered regions span residues 213–232 (QQQKHQEEKEKNDQKEKEEK), 445–515 (SSLG…NQQP), 551–701 (ATTT…VDKQ), 716–766 (RTPL…KSPS), 797–837 (TITI…TPNK), and 929–981 (DEVS…DPVS). Over residues 216-232 (KHQEEKEKNDQKEKEEK) the composition is skewed to basic and acidic residues. Composition is skewed to low complexity over residues 454 to 469 (SPEKSISPSFTSSTSE), 479 to 493 (HNNNNNNYNNSSTNN), 501 to 515 (PSLSSNHSQQPNQQP), and 551 to 581 (ATTTTTTATSPSTSTSTSTSTSPNSSSLSIS). The segment covering 618-627 (NGTTSPRNNE) has biased composition (polar residues). 2 stretches are compositionally biased toward low complexity: residues 628-651 (SSVTAATTTTTSTTASITTNVNTI) and 663-686 (TPTTGTPSTSTPTPQTPTSTSQND). Basic and acidic residues predominate over residues 687 to 701 (KQNENNNKENFVDKQ). 3 stretches are compositionally biased toward low complexity: residues 724 to 748 (SSNSSSPSNNSNTTNSSSHSSTNSS), 797 to 836 (TITINNNNNNNNNNNNNNNNNNNNIQQQQQQQQQIPTTPN), and 933 to 952 (ESSSSSSSSTTSPNNINTPS). Residues 802-831 (NNNNNNNNNNNNNNNNNNNIQQQQQQQQQI) adopt a coiled-coil conformation. The span at 968–978 (NLSSINNSSYD) shows a compositional bias: polar residues. Residues 1291–1411 (GRYVPKAGTL…ILGGLIKKKE (121 aa)) enclose the N-terminal Ras-GEF domain. Positions 1447-1676 (NESEIARQLT…YQLSLIREPR (230 aa)) constitute a Ras-GEF domain.

Phosphorylated on threonine residues.

Promotes the exchange of Ras-bound GDP by GTP. May also play a role in the activation of rasG. In Dictyostelium discoideum (Social amoeba), this protein is Ras guanine nucleotide exchange factor R (gefR).